A 35-amino-acid polypeptide reads, in one-letter code: Conotoxin TxMEKL-0422 (35 aa).

Residues 1–35 (NPASCCSCADVDPGRASRKTPKGEDQVFIKEKDRC) are disordered. Basic and acidic residues predominate over residues 21 to 35 (PKGEDQVFIKEKDRC).

Post-translationally, contains disulfide bonds. Expressed by the venom duct.

The protein resides in the secreted. The chain is Conotoxin TxMEKL-0422 from Conus textile (Cloth-of-gold cone).